The following is a 127-amino-acid chain: Aspartate 1-decarboxylase (127 aa).

The active-site Schiff-base intermediate with substrate; via pyruvic acid is the Ser25. At Ser25 the chain carries Pyruvic acid (Ser). Thr57 contacts substrate. Tyr58 acts as the Proton donor in catalysis. Gly73 to Ala75 is a substrate binding site.

Belongs to the PanD family. Heterooctamer of four alpha and four beta subunits. Requires pyruvate as cofactor. Is synthesized initially as an inactive proenzyme, which is activated by self-cleavage at a specific serine bond to produce a beta-subunit with a hydroxyl group at its C-terminus and an alpha-subunit with a pyruvoyl group at its N-terminus.

Its subcellular location is the cytoplasm. The catalysed reaction is L-aspartate + H(+) = beta-alanine + CO2. Its pathway is cofactor biosynthesis; (R)-pantothenate biosynthesis; beta-alanine from L-aspartate: step 1/1. Catalyzes the pyruvoyl-dependent decarboxylation of aspartate to produce beta-alanine. The sequence is that of Aspartate 1-decarboxylase from Bacillus pumilus (strain SAFR-032).